A 413-amino-acid polypeptide reads, in one-letter code: Serine hydroxymethyltransferase (413 aa).

Residues L119 and 123–125 (GHL) each bind (6S)-5,6,7,8-tetrahydrofolate. K228 is modified (N6-(pyridoxal phosphate)lysine). E243 is a binding site for (6S)-5,6,7,8-tetrahydrofolate.

It belongs to the SHMT family. In terms of assembly, homodimer. Requires pyridoxal 5'-phosphate as cofactor.

It is found in the cytoplasm. It carries out the reaction (6R)-5,10-methylene-5,6,7,8-tetrahydrofolate + glycine + H2O = (6S)-5,6,7,8-tetrahydrofolate + L-serine. The protein operates within one-carbon metabolism; tetrahydrofolate interconversion. It participates in amino-acid biosynthesis; glycine biosynthesis; glycine from L-serine: step 1/1. In terms of biological role, catalyzes the reversible interconversion of serine and glycine with tetrahydrofolate (THF) serving as the one-carbon carrier. This reaction serves as the major source of one-carbon groups required for the biosynthesis of purines, thymidylate, methionine, and other important biomolecules. Also exhibits THF-independent aldolase activity toward beta-hydroxyamino acids, producing glycine and aldehydes, via a retro-aldol mechanism. The polypeptide is Serine hydroxymethyltransferase (Thermoanaerobacter pseudethanolicus (strain ATCC 33223 / 39E) (Clostridium thermohydrosulfuricum)).